Here is a 209-residue protein sequence, read N- to C-terminus: Uracil phosphoribosyltransferase (209 aa).

Residues arginine 79, arginine 104, and 131 to 139 (DPMLATGGS) contribute to the 5-phospho-alpha-D-ribose 1-diphosphate site. Uracil contacts are provided by residues isoleucine 194 and 199–201 (GDA). Residue aspartate 200 participates in 5-phospho-alpha-D-ribose 1-diphosphate binding.

It belongs to the UPRTase family. It depends on Mg(2+) as a cofactor.

The enzyme catalyses UMP + diphosphate = 5-phospho-alpha-D-ribose 1-diphosphate + uracil. It functions in the pathway pyrimidine metabolism; UMP biosynthesis via salvage pathway; UMP from uracil: step 1/1. Allosterically activated by GTP. Catalyzes the conversion of uracil and 5-phospho-alpha-D-ribose 1-diphosphate (PRPP) to UMP and diphosphate. The sequence is that of Uracil phosphoribosyltransferase from Streptococcus pyogenes serotype M49 (strain NZ131).